Consider the following 108-residue polypeptide: Small ribosomal subunit protein eS25 (108 aa).

The segment at 1–36 is disordered; the sequence is MAPKKAQAPPPSSKPAKSGGGKQKKKKWSKGKQKEK. Basic residues predominate over residues 22 to 31; it reads KQKKKKWSKG.

It belongs to the eukaryotic ribosomal protein eS25 family.

In Solanum lycopersicum (Tomato), this protein is Small ribosomal subunit protein eS25 (RPS25).